A 771-amino-acid polypeptide reads, in one-letter code: Heat shock transcription factor (771 aa).

Residues 1–70 (MTTNLYAIAG…GIGISKPGLS (70 aa)) are disordered. Low complexity-rich tracts occupy residues 11–23 (PSKP…TPSP) and 31–42 (LKSLTSLPTNPL). Polar residues predominate over residues 43 to 62 (NPQGTSTSNALTNQSSSTGI). Residues 78-168 (MKVPAFLNKL…PIELWEFANP (91 aa)) mediate DNA binding. Positions 183-266 (RKNNRLSNSG…PPSHTSAGPL (84 aa)) are disordered. 2 stretches are compositionally biased toward low complexity: residues 189–199 (SNSGVGSSSSL) and 212–233 (SASA…ISQG). Residues 238 to 262 (NHSTSGKYLITDGTTPGSAPPSHTS) are compositionally biased toward polar residues. The involved in trimerization stretch occupies residues 280–333 (GIAAIRQTQASIATDLRKLQASNEALWRQAYETQEKQRKHEETIDLIVSFLERL). 2 stretches are compositionally biased toward basic and acidic residues: residues 350-372 (RGVG…ARFA) and 399-415 (TGEH…DRLV). 3 disordered regions span residues 350-513 (RGVG…SSNA), 590-634 (QALT…GSGT), and 708-771 (SGVG…SGLK). The segment covering 418-448 (GSNSEYSIPSVKRTSSSSHPLSLGQLGSSRF) has biased composition (polar residues). Composition is skewed to low complexity over residues 497–511 (LSPL…PSSS) and 599–620 (HNPS…SASA).

It belongs to the HSF family. Homotrimer. Homotrimerization increases the affinity of HSF1 to DNA. Interacts with transcriptional coregulator SSA1 on chromatin. In terms of processing, phosphorylated at high temperature.

Its subcellular location is the nucleus. Its function is as follows. DNA-binding transcription factor that specifically binds heat shock promoter elements (HSE) and activates transcription. Promotes thermotolerance by transiently regulating a subset of genes. Induces expression of STI, SSA1, SSA2, HSP78 and KAR2 during the heat response. This Cryptococcus neoformans var. grubii serotype A (strain H99 / ATCC 208821 / CBS 10515 / FGSC 9487) (Filobasidiella neoformans var. grubii) protein is Heat shock transcription factor.